Consider the following 510-residue polypeptide: Metalloprotease TIKI homolog (510 aa).

The signal sequence occupies residues 1–30; the sequence is MQVKIVQVFPCLVLLVKLVLLSVLLPSATG. At 31-489 the chain is on the extracellular side; it reads SYHCSNNATQ…FIPSASSGLR (459 aa). Residues Asn-37, Asn-98, Asn-108, Asn-141, Asn-223, Asn-281, Asn-322, Asn-383, and Asn-417 are each glycosylated (N-linked (GlcNAc...) asparagine). The segment covering 435-471 has biased composition (low complexity); it reads TSLNSATASTTVATPTSSVTPPTSSSSQTRSLTISDS. The interval 435–477 is disordered; that stretch reads TSLNSATASTTVATPTSSVTPPTSSSSQTRSLTISDSQRTSDD. A helical transmembrane segment spans residues 490 to 510; sequence YNIGLVCVTLFFVLLIITSAL.

This sequence belongs to the TIKI family. Requires Mn(2+) as cofactor. It depends on Co(2+) as a cofactor.

It localises to the membrane. Its function is as follows. Metalloprotease. This Amphimedon queenslandica (Sponge) protein is Metalloprotease TIKI homolog.